The sequence spans 68 residues: Large ribosomal subunit protein bL33c (68 aa).

Belongs to the bacterial ribosomal protein bL33 family.

It is found in the plastid. The protein localises to the chloroplast. The protein is Large ribosomal subunit protein bL33c of Lactuca sativa (Garden lettuce).